Consider the following 163-residue polypeptide: MIRQEVLHAVLDPKAVHFKQFWLSSVDRDESELLEVLCFGNYGDLNAIQSCEEWKDAIESKLRTLTLLGLCEVPSELEYDQAMASCCIPDDVILEQRMVELQAQVHFQLDSVGRRIKVLRCLGARDIYNGERPLLLLRDAARSRESTLAGLRQWKQKLQYQLR.

The region spanning 5 to 120 (EVLHAVLDPK…SVGRRIKVLR (116 aa)) is the PCI domain.

In terms of assembly, component of a COP9 signalosome-like (CSN) complex.

It is found in the cytoplasm. The protein localises to the nucleus. Component of the COP9 signalosome (CSN) complex that acts as a regulator of the ubiquitin (Ubl) conjugation pathway by mediating the deneddylation of the cullin subunit of SCF-type E3 ubiquitin-protein ligase complexes. The complex is involved in the regulation of the mating pheromone response. The chain is COP9 signalosome complex subunit 9 (CSN9) from Eremothecium gossypii (strain ATCC 10895 / CBS 109.51 / FGSC 9923 / NRRL Y-1056) (Yeast).